The chain runs to 360 residues: Photosystem II protein D1 (360 aa).

Helical transmembrane passes span 29 to 46, 118 to 133, and 142 to 156; these read YVGW…TATT, HFLL…QWEL, and WICV…AATA. A chlorophyll a-binding site is contributed by His-118. Tyr-126 lines the pheophytin a pocket. Asp-170 and Glu-189 together coordinate [CaMn4O5] cluster. The helical transmembrane segment at 197–218 threads the bilayer; it reads FHMLGVAGVFGGSLFSAMHGSL. His-198 provides a ligand contact to chlorophyll a. Residues His-215 and 264–265 each bind a quinone; that span reads SF. His-215 contributes to the Fe cation binding site. Residue His-272 participates in Fe cation binding. A helical membrane pass occupies residues 274–288; it reads FLGAWPVIGIWFTAM. The [CaMn4O5] cluster site is built by His-332, Glu-333, Asp-342, and Ala-344. Residues 345 to 360 constitute a propeptide that is removed on maturation; the sequence is SGEQAPVALTAPAING.

It belongs to the reaction center PufL/M/PsbA/D family. In terms of assembly, PSII is composed of 1 copy each of membrane proteins PsbA, PsbB, PsbC, PsbD, PsbE, PsbF, PsbH, PsbI, PsbJ, PsbK, PsbL, PsbM, PsbT, PsbX, PsbY, PsbZ, Psb30/Ycf12, peripheral proteins PsbO, CyanoQ (PsbQ), PsbU, PsbV and a large number of cofactors. It forms dimeric complexes. The D1/D2 heterodimer binds P680, chlorophylls that are the primary electron donor of PSII, and subsequent electron acceptors. It shares a non-heme iron and each subunit binds pheophytin, quinone, additional chlorophylls, carotenoids and lipids. D1 provides most of the ligands for the Mn4-Ca-O5 cluster of the oxygen-evolving complex (OEC). There is also a Cl(-1) ion associated with D1 and D2, which is required for oxygen evolution. The PSII complex binds additional chlorophylls, carotenoids and specific lipids. is required as a cofactor. In terms of processing, tyr-161 forms a radical intermediate that is referred to as redox-active TyrZ, YZ or Y-Z. Post-translationally, C-terminally processed by CtpA; processing is essential to allow assembly of the oxygen-evolving complex and thus photosynthetic growth.

The protein resides in the cellular thylakoid membrane. The enzyme catalyses 2 a plastoquinone + 4 hnu + 2 H2O = 2 a plastoquinol + O2. Photosystem II (PSII) is a light-driven water:plastoquinone oxidoreductase that uses light energy to abstract electrons from H(2)O, generating O(2) and a proton gradient subsequently used for ATP formation. It consists of a core antenna complex that captures photons, and an electron transfer chain that converts photonic excitation into a charge separation. The D1/D2 (PsbA/PsbD) reaction center heterodimer binds P680, the primary electron donor of PSII as well as several subsequent electron acceptors. This is Photosystem II protein D1 from Microcystis aeruginosa.